Reading from the N-terminus, the 719-residue chain is Lanosterol synthase (719 aa).

One copy of the PFTB 1 repeat lies at 118–160 (RIEVIRYLVNHANPEDGGWGIHIEGKSTVFGTALNYVVLRILG). Asp451 functions as the Proton donor in the catalytic mechanism. PFTB repeat units follow at residues 478–523 (LKDS…MIEH), 555–595 (VKNA…SCVK), and 604–645 (SRRA…VVQT).

Belongs to the terpene cyclase/mutase family.

It catalyses the reaction (S)-2,3-epoxysqualene = lanosterol. The protein operates within terpene metabolism; lanosterol biosynthesis; lanosterol from farnesyl diphosphate: step 3/3. Functionally, catalyzes the cyclization of (S)-2,3 oxidosqualene to lanosterol, a reaction that forms the sterol nucleus. In Pneumocystis carinii, this protein is Lanosterol synthase (ERG7).